A 1034-amino-acid chain; its full sequence is MFAQLDTKTVYSFMDSLIDLNHYFERAKQFGYHTIGIMDKDNLYGAYHFIKGCQKNGLQPVLGLEIEILYQERQVLLNLIAQNTQGYHQLLKISTAKMSGKLHMDYFCQHLEGIAVIIPSKGWSDTLVVPFDYYMGVDQYTDLSHMDSKRQLIPLRTVRYFAQDDMETLHMLHAIRDNLSLAETPVVESDQELADCQQLTAFYQTHCPQALQNLEDLVSGIYYDFDTNLKLPHFNRDKSAKQELQDLTEAGLKEKGLWKEPYQSRLLHELVIISDMGFDDYFLIVWDLLRFGRSKGYYMGMGRGSAAGSLVAYALNITGIDPVQHDLLFERFLNKERYSMPDIDIDLPDIYRSEFLRYVRNRYGSDHSAQIVTFSTFGQAIRDVFKRFGVPEYELTNLTKKIGFKDSLATVYEKSISFRQVINSRTEFQKAFAIAKRIEGNPRQTSIHAAGIVMSDDALTNHIPLKSGDDMMITQYDAHAVEANGLLKMDFLGLRNLTFVQKMQEKVAKDYGCQIDITAIDLEDPQTLALFAKGDTKGIFQFEQNGAINLLKRIKPQRFEEIVATTSLNRPGASDYTTNFIKRREGQEKIDLIDPVIAPILEPTYGIMLYQEQVMQIAQVYAGFTLGKADLLRRAMSKKNLQEMQKMEEDFIASAKHLGRAEETARGLFKRMEKFAGYGFNRSHAFAYSALAFQLAYFKAHYPAVFYDIMMNYSSSDYITDALESDFQVAQVTINSIPYTDKIEASKIYMGLKNIKGLPRDFAYWIIEQRPFNSVEDFLTRTPEKYQKKVFLEPLIKIGLFDCFEPNRKKILDNLDGLLVFVNELGSLFSDSSFSWVDTKDYSVTEKYSLEQEIVGVGMSKHPLIDIAEKSTQTFTPISQLVKESEAVVLIQIDSIRIIRTKTSGQQMAFLSVNDTKKKLDVTLFPQEYAIYKDQLKEGEFYYLKGRIKERDHRLQMVCQQVQMAISQKYWLLVENHQFDSQISEILGAFPGTTPVVIHYQKNKETIALTKIQVHVTENLKEKLRPFVLKTVFR.

Belongs to the DNA polymerase type-C family. DnaE subfamily. DNA polymerase III contains a core (composed of alpha, epsilon and theta chains) that associates with a tau subunit. This core dimerizes to form the PolIII' complex. PolIII' associates with the gamma complex (composed of gamma, delta, delta', psi and chi chains) and with the beta chain to form the complete DNA polymerase III complex.

The protein resides in the cytoplasm. The catalysed reaction is DNA(n) + a 2'-deoxyribonucleoside 5'-triphosphate = DNA(n+1) + diphosphate. Its function is as follows. DNA polymerase III is a complex, multichain enzyme responsible for most of the replicative synthesis in bacteria. This DNA polymerase also exhibits 3' to 5' exonuclease activity. The alpha chain is the DNA polymerase. In Streptococcus pyogenes, this protein is DNA polymerase III subunit alpha (dnaE).